The following is a 350-amino-acid chain: Protein FAM118B (350 aa).

A2 bears the N-acetylalanine mark. S9 is modified (phosphoserine). Residues 330 to 350 (AREGQLNGSSAAHGEIRGCST) are disordered.

The protein belongs to the FAM118 family.

Its subcellular location is the nucleus. The protein resides in the cajal body. Its function is as follows. May play a role in Cajal bodies formation. The sequence is that of Protein FAM118B (Fam118b) from Rattus norvegicus (Rat).